The following is a 209-amino-acid chain: Octanoyltransferase (209 aa).

Residues 30 to 209 form the BPL/LPL catalytic domain; it reads VNEPEIVYLV…IQTEFNKIFT (180 aa). Residues 69-76, 143-145, and 156-158 each bind substrate; these read RGGKFTFH, AIG, and GVA. The active-site Acyl-thioester intermediate is the Cys-174.

This sequence belongs to the LipB family.

It is found in the cytoplasm. It catalyses the reaction octanoyl-[ACP] + L-lysyl-[protein] = N(6)-octanoyl-L-lysyl-[protein] + holo-[ACP] + H(+). It participates in protein modification; protein lipoylation via endogenous pathway; protein N(6)-(lipoyl)lysine from octanoyl-[acyl-carrier-protein]: step 1/2. Its function is as follows. Catalyzes the transfer of endogenously produced octanoic acid from octanoyl-acyl-carrier-protein onto the lipoyl domains of lipoate-dependent enzymes. Lipoyl-ACP can also act as a substrate although octanoyl-ACP is likely to be the physiological substrate. The polypeptide is Octanoyltransferase (Rickettsia canadensis (strain McKiel)).